A 257-amino-acid chain; its full sequence is Enolase-phosphatase E1 (257 aa).

Mg(2+)-binding residues include D16 and E18. Substrate is bound by residues 150 to 151 (SS) and K184. A Mg(2+)-binding site is contributed by D209.

Belongs to the HAD-like hydrolase superfamily. MasA/MtnC family. In terms of assembly, monomer. The cofactor is Mg(2+).

It localises to the cytoplasm. The protein localises to the nucleus. It carries out the reaction 5-methylsulfanyl-2,3-dioxopentyl phosphate + H2O = 1,2-dihydroxy-5-(methylsulfanyl)pent-1-en-3-one + phosphate. The protein operates within amino-acid biosynthesis; L-methionine biosynthesis via salvage pathway; L-methionine from S-methyl-5-thio-alpha-D-ribose 1-phosphate: step 3/6. It participates in amino-acid biosynthesis; L-methionine biosynthesis via salvage pathway; L-methionine from S-methyl-5-thio-alpha-D-ribose 1-phosphate: step 4/6. Functionally, bifunctional enzyme that catalyzes the enolization of 2,3-diketo-5-methylthiopentyl-1-phosphate (DK-MTP-1-P) into the intermediate 2-hydroxy-3-keto-5-methylthiopentenyl-1-phosphate (HK-MTPenyl-1-P), which is then dephosphorylated to form the acireductone 1,2-dihydroxy-3-keto-5-methylthiopentene (DHK-MTPene). The chain is Enolase-phosphatase E1 (Enoph1) from Mus musculus (Mouse).